The chain runs to 398 residues: Tryptophan synthase beta chain (398 aa).

Lysine 88 is subject to N6-(pyridoxal phosphate)lysine.

It belongs to the TrpB family. In terms of assembly, tetramer of two alpha and two beta chains. Requires pyridoxal 5'-phosphate as cofactor.

It catalyses the reaction (1S,2R)-1-C-(indol-3-yl)glycerol 3-phosphate + L-serine = D-glyceraldehyde 3-phosphate + L-tryptophan + H2O. Its pathway is amino-acid biosynthesis; L-tryptophan biosynthesis; L-tryptophan from chorismate: step 5/5. Functionally, the beta subunit is responsible for the synthesis of L-tryptophan from indole and L-serine. The protein is Tryptophan synthase beta chain of Histophilus somni (strain 2336) (Haemophilus somnus).